The sequence spans 311 residues: Methionyl-tRNA formyltransferase (311 aa).

Residue 110-113 (SLLP) coordinates (6S)-5,6,7,8-tetrahydrofolate.

Belongs to the Fmt family.

The catalysed reaction is L-methionyl-tRNA(fMet) + (6R)-10-formyltetrahydrofolate = N-formyl-L-methionyl-tRNA(fMet) + (6S)-5,6,7,8-tetrahydrofolate + H(+). Functionally, attaches a formyl group to the free amino group of methionyl-tRNA(fMet). The formyl group appears to play a dual role in the initiator identity of N-formylmethionyl-tRNA by promoting its recognition by IF2 and preventing the misappropriation of this tRNA by the elongation apparatus. This Streptococcus agalactiae serotype Ia (strain ATCC 27591 / A909 / CDC SS700) protein is Methionyl-tRNA formyltransferase.